We begin with the raw amino-acid sequence, 179 residues long: Large ribosomal subunit protein uL5 (179 aa).

It belongs to the universal ribosomal protein uL5 family. In terms of assembly, part of the 50S ribosomal subunit; part of the 5S rRNA/L5/L18/L25 subcomplex. Contacts the 5S rRNA and the P site tRNA. Forms a bridge to the 30S subunit in the 70S ribosome.

Functionally, this is one of the proteins that bind and probably mediate the attachment of the 5S RNA into the large ribosomal subunit, where it forms part of the central protuberance. In the 70S ribosome it contacts protein S13 of the 30S subunit (bridge B1b), connecting the 2 subunits; this bridge is implicated in subunit movement. Contacts the P site tRNA; the 5S rRNA and some of its associated proteins might help stabilize positioning of ribosome-bound tRNAs. In Prochlorococcus marinus (strain NATL2A), this protein is Large ribosomal subunit protein uL5.